An 85-amino-acid chain; its full sequence is MTSVQSVTCCCLLWLMLSVQPITPGSPGPAQLSRERSFKFLSGGFKEIVCHRYCAKGIAKEFCNCPDKRDVVSPRIRRRKRSKAM.

Residues 1–24 (MTSVQSVTCCCLLWLMLSVQPITP) form the signal peptide. A propeptide spanning residues 25-38 (GSPGPAQLSRERSF) is cleaved from the precursor. 4-carboxyglutamate is present on glutamate 47. Aspartate 67 carries the post-translational modification Aspartic acid 1-amide. A propeptide spanning residues 68-85 (KRDVVSPRIRRRKRSKAM) is cleaved from the precursor.

It belongs to the conotoxin J superfamily. In terms of processing, contains 2 disulfide bonds. In terms of tissue distribution, expressed by the venom duct.

The protein localises to the secreted. Its function is as follows. Causes scratching in mice. In Conus geographus (Geography cone), this protein is Scratcher peptide.